We begin with the raw amino-acid sequence, 430 residues long: Enolase (430 aa).

Glutamine 167 lines the (2R)-2-phosphoglycerate pocket. Glutamate 209 functions as the Proton donor in the catalytic mechanism. Residues aspartate 246, glutamate 287, and aspartate 314 each contribute to the Mg(2+) site. (2R)-2-phosphoglycerate contacts are provided by lysine 339, arginine 368, serine 369, and lysine 390. Lysine 339 functions as the Proton acceptor in the catalytic mechanism.

Belongs to the enolase family. Mg(2+) serves as cofactor.

It is found in the cytoplasm. The protein resides in the secreted. It localises to the cell surface. The catalysed reaction is (2R)-2-phosphoglycerate = phosphoenolpyruvate + H2O. It participates in carbohydrate degradation; glycolysis; pyruvate from D-glyceraldehyde 3-phosphate: step 4/5. Functionally, catalyzes the reversible conversion of 2-phosphoglycerate (2-PG) into phosphoenolpyruvate (PEP). It is essential for the degradation of carbohydrates via glycolysis. This Prochlorococcus marinus (strain MIT 9515) protein is Enolase.